The sequence spans 434 residues: Exopolygalacturonase X-1 (434 aa).

Residues 1-22 (MKLSHLLTSAVSVLSLGLTVEG) form the signal peptide. 3 N-linked (GlcNAc...) asparagine glycosylation sites follow: asparagine 113, asparagine 129, and asparagine 199. One copy of the PbH1 1 repeat lies at 231-252 (SKNIVIQNSVINNGDDCVSFKP). The active-site Proton donor is aspartate 245. A disulfide bridge links cysteine 247 with cysteine 264. N-linked (GlcNAc...) asparagine glycosylation is found at asparagine 253 and asparagine 265. A PbH1 2 repeat occupies 254–274 (STEILVQNLYCNGSHGISVGS). Residue histidine 268 is part of the active site. Asparagine 292, asparagine 297, asparagine 329, asparagine 354, and asparagine 364 each carry an N-linked (GlcNAc...) asparagine glycan. The stretch at 327-348 (VSNITYEDMYIENVDWAIEITQ) is one PbH1 3 repeat. The stretch at 362 to 405 (PSNLTISDVYISNMYGTTSSARDPNIGTIVCSSPDVCSNIYVEN) is one PbH1 4 repeat. Cysteine 392 and cysteine 398 form a disulfide bridge. N-linked (GlcNAc...) asparagine glycans are attached at residues asparagine 423 and asparagine 430.

This sequence belongs to the glycosyl hydrolase 28 family.

Its subcellular location is the secreted. It carries out the reaction [(1-&gt;4)-alpha-D-galacturonosyl](n) + H2O = alpha-D-galacturonate + [(1-&gt;4)-alpha-D-galacturonosyl](n-1). Its function is as follows. Specific in hydrolyzing the terminal glycosidic bond of polygalacturonic acid and oligogalacturonates. This Emericella nidulans (strain FGSC A4 / ATCC 38163 / CBS 112.46 / NRRL 194 / M139) (Aspergillus nidulans) protein is Exopolygalacturonase X-1 (pgaX-1).